Consider the following 157-residue polypeptide: Ribonuclease H (157 aa).

The region spanning 1–146 (MPDLVAYTDG…ADELARAGMA (146 aa)) is the RNase H type-1 domain. Mg(2+) contacts are provided by aspartate 9, glutamate 52, aspartate 74, and aspartate 138.

The protein belongs to the RNase H family. In terms of assembly, monomer. Requires Mg(2+) as cofactor.

It is found in the cytoplasm. The catalysed reaction is Endonucleolytic cleavage to 5'-phosphomonoester.. In terms of biological role, endonuclease that specifically degrades the RNA of RNA-DNA hybrids. In Jannaschia sp. (strain CCS1), this protein is Ribonuclease H.